The chain runs to 854 residues: Envelope glycoprotein B (854 aa).

The N-terminal stretch at 1–30 is a signal peptide; the sequence is MSKNWFPLLCASVLVVYVSIASSSTGTASG. Topologically, residues 31–723 are virion surface; the sequence is AVTPTSPTEN…EGVVGFIKNP (693 aa). 3 N-linked (GlcNAc...) asparagine; by host glycosylation sites follow: Asn40, Asn48, and Asn60. 5 disulfide bridges follow: Cys69/Cys524, Cys86/Cys480, Cys160/Cys225, Cys317/Cys364, and Cys546/Cys583. The segment at 127-133 is involved in fusion and/or binding to host membrane; it reads SYSFIRE. Asn183 carries an N-linked (GlcNAc...) asparagine; by host glycan. Positions 212-219 are involved in fusion and/or binding to host membrane; sequence GSTWLYTT. N-linked (GlcNAc...) asparagine; by host glycans are attached at residues Asn256, Asn275, Asn314, Asn356, Asn378, Asn382, Asn390, Asn423, Asn426, Asn442, Asn558, and Asn595. Hydrophobic membrane proximal region regions lie at residues 669-721 and 700-720; these read VEGK…GFIK and VAIGAVGGAVASFVEGVVGFI. The helical transmembrane segment at 724 to 744 threads the bilayer; the sequence is FGSFTVILFLLAVLGVIYLIY. Residues 745–854 are Intravirion-facing; the sequence is MRQKRAYEKP…YQKIQNEYEV (110 aa).

Belongs to the herpesviridae glycoprotein B family. Homotrimer; disulfide-linked. Binds to heparan sulfate proteoglycans. Interacts with gH/gL heterodimer. Post-translationally, a proteolytic cleavage by host furin generates two subunits that remain linked by disulfide bonds.

It localises to the virion membrane. The protein resides in the host cell membrane. It is found in the host endosome membrane. Its subcellular location is the host Golgi apparatus membrane. Functionally, envelope glycoprotein that forms spikes at the surface of virion envelope. Essential for the initial attachment to heparan sulfate moieties of the host cell surface proteoglycans. Involved in fusion of viral and cellular membranes leading to virus entry into the host cell. Following initial binding to its host receptors, membrane fusion is mediated by the fusion machinery composed at least of gB and the heterodimer gH/gL. May be involved in the fusion between the virion envelope and the outer nuclear membrane during virion egress. In Macaca mulatta (Rhesus macaque), this protein is Envelope glycoprotein B.